We begin with the raw amino-acid sequence, 149 residues long: Large ribosomal subunit protein bL9 (149 aa).

This sequence belongs to the bacterial ribosomal protein bL9 family.

Functionally, binds to the 23S rRNA. This Vibrio vulnificus (strain CMCP6) protein is Large ribosomal subunit protein bL9.